The following is a 592-amino-acid chain: ATP-dependent RNA helicase DBP3 (592 aa).

The interval 1-146 is disordered; sequence MGKRPIEDDA…AGSYTEHTEL (146 aa). Basic residues predominate over residues 19–31; it reads KKSKKEKSGKSKK. Residues 73–82 show a composition bias toward basic and acidic residues; sequence EAKEASKAGK. Over residues 97-108 the composition is skewed to basic residues; sequence AARKAARKAEKK. Positions 116–141 are enriched in polar residues; the sequence is TASSAPTEASSVPAQTLSSSNAGSYT. The short motif at 179 to 206 is the Q motif element; it reads VNFKYLPVTDESQRAPFAGFTAPTPIQA. In terms of domain architecture, Helicase ATP-binding spans 209 to 382; sequence WPFLLSGRDM…STFMVSPVRI (174 aa). Residue 222–229 participates in ATP binding; the sequence is AETGSGKT. The short motif at 330–333 is the DEAD box element; it reads DEAD. Positions 413–562 constitute a Helicase C-terminal domain; that stretch reads RLLQLLKQYQ…EVPEELLKFG (150 aa).

This sequence belongs to the DEAD box helicase family. DDX5/DBP2 subfamily.

Its subcellular location is the nucleus. It is found in the nucleolus. The catalysed reaction is ATP + H2O = ADP + phosphate + H(+). Its function is as follows. ATP-dependent RNA helicase required for 60S ribosomal subunit synthesis. Involved in efficient pre-rRNA processing, predominantly at site A3, which is necessary for the normal formation of 25S and 5.8S rRNAs. This Phaeosphaeria nodorum (strain SN15 / ATCC MYA-4574 / FGSC 10173) (Glume blotch fungus) protein is ATP-dependent RNA helicase DBP3 (DBP3).